A 288-amino-acid chain; its full sequence is Prohibitin-1, mitochondrial (288 aa).

At 1–10 (MNNVKVPKIP) the chain is on the mitochondrial matrix side. Residues 11–30 (GGGAISTLLKVGIIGGLGLY) traverse the membrane as a helical; Signal-anchor for type II membrane protein segment. Over 31 to 288 (GATHSLYNVE…GMNLDVDAKN (258 aa)) the chain is Mitochondrial intermembrane. Residues 186–219 (KEFTAAIEAKQVAAQEAERAKFIVEKAEQDKRSA) are a coiled coil.

The protein belongs to the prohibitin family. In terms of assembly, component of a prohibitin multimeric complex in mitochondrial membranes. As to expression, mostly expressed in proliferative tissues, including vasculature, shoot and root apical tissues.

It localises to the mitochondrion inner membrane. Prohibitin probably acts as a holdase/unfoldase for the stabilization of newly synthesized mitochondrial proteins. This chain is Prohibitin-1, mitochondrial (PHB1), found in Arabidopsis thaliana (Mouse-ear cress).